Here is a 372-residue protein sequence, read N- to C-terminus: Queuine tRNA-ribosyltransferase (372 aa).

Aspartate 89 functions as the Proton acceptor in the catalytic mechanism. Residues 89-93 (DSGGF), aspartate 161, and glycine 232 contribute to the substrate site. An RNA binding region spans residues 262-268 (GIGDLPS). Aspartate 281 (nucleophile) is an active-site residue. Residues 286-290 (TKAAR) form an RNA binding; important for wobble base 34 recognition region. Zn(2+) contacts are provided by cysteine 319, cysteine 321, cysteine 324, and histidine 351.

Belongs to the queuine tRNA-ribosyltransferase family. In terms of assembly, homodimer. Within each dimer, one monomer is responsible for RNA recognition and catalysis, while the other monomer binds to the replacement base PreQ1. Zn(2+) serves as cofactor.

The catalysed reaction is 7-aminomethyl-7-carbaguanine + guanosine(34) in tRNA = 7-aminomethyl-7-carbaguanosine(34) in tRNA + guanine. Its pathway is tRNA modification; tRNA-queuosine biosynthesis. In terms of biological role, catalyzes the base-exchange of a guanine (G) residue with the queuine precursor 7-aminomethyl-7-deazaguanine (PreQ1) at position 34 (anticodon wobble position) in tRNAs with GU(N) anticodons (tRNA-Asp, -Asn, -His and -Tyr). Catalysis occurs through a double-displacement mechanism. The nucleophile active site attacks the C1' of nucleotide 34 to detach the guanine base from the RNA, forming a covalent enzyme-RNA intermediate. The proton acceptor active site deprotonates the incoming PreQ1, allowing a nucleophilic attack on the C1' of the ribose to form the product. After dissociation, two additional enzymatic reactions on the tRNA convert PreQ1 to queuine (Q), resulting in the hypermodified nucleoside queuosine (7-(((4,5-cis-dihydroxy-2-cyclopenten-1-yl)amino)methyl)-7-deazaguanosine). The polypeptide is Queuine tRNA-ribosyltransferase (Chlamydia caviae (strain ATCC VR-813 / DSM 19441 / 03DC25 / GPIC) (Chlamydophila caviae)).